The sequence spans 316 residues: tRNA dimethylallyltransferase (316 aa).

An ATP-binding site is contributed by 17 to 24 (GPTASGKT). Residue 19–24 (TASGKT) coordinates substrate. 4 interaction with substrate tRNA regions span residues 42-45 (DSAL), 166-170 (QRLSR), 247-252 (RCVGYR), and 280-287 (KRQITWLR).

This sequence belongs to the IPP transferase family. Monomer. The cofactor is Mg(2+).

It catalyses the reaction adenosine(37) in tRNA + dimethylallyl diphosphate = N(6)-dimethylallyladenosine(37) in tRNA + diphosphate. Its function is as follows. Catalyzes the transfer of a dimethylallyl group onto the adenine at position 37 in tRNAs that read codons beginning with uridine, leading to the formation of N6-(dimethylallyl)adenosine (i(6)A). This is tRNA dimethylallyltransferase from Shigella boydii serotype 18 (strain CDC 3083-94 / BS512).